We begin with the raw amino-acid sequence, 837 residues long: Tuftelin-interacting protein 11 (837 aa).

Over residues 1–13 the composition is skewed to basic and acidic residues; the sequence is MSLSHLYRDGEGH. 3 disordered regions span residues 1–31, 54–73, and 85–136; these read MSLS…DWDL, WAER…RARD, and LKKG…AGGT. Residues 1-50 are required for interaction with DHX15; sequence MSLSHLYRDGEGHMDDDEDERENFEITDWDLQNEFNPNRQRHWQTKEEAT. S2 is subject to Phosphoserine. The span at 14–28 shows a compositional bias: acidic residues; the sequence is MDDDEDERENFEITD. Positions 54-64 are enriched in basic and acidic residues; sequence WAERDSDEERP. Phosphoserine occurs at positions 59 and 98. A compositionally biased stretch (acidic residues) spans 91 to 102; sequence EEAELEDSDDEE. Residues 103 to 116 show a composition bias toward basic and acidic residues; the sequence is KPVKQDEFPKDFGP. S144 is modified (phosphoserine). A G-patch domain is found at 149 to 195; that stretch reads TKGIGQKLLQKMGYVPGRGLGKNAQGIINPIEAKQRKGKGAVGAYGS. Disordered regions lie at residues 183–236 and 287–313; these read QRKG…KKKP and HKHS…ARAP. Phosphoserine is present on S210. Basic and acidic residues predominate over residues 217 to 231; the sequence is EFQKELSQWRKDPSG. The Nuclear localization signal signature appears at 700–705; it reads VKDKFN. The segment at 710–734 is required for nuclear speckle localization; that stretch reads IMNRAVSSNVGAYMQPGAREHIAYL.

This sequence belongs to the TFP11/STIP family. As to quaternary structure, identified in the spliceosome C complex. Found in the Intron Large (IL) complex, a post-mRNA release spliceosomal complex containing the excised intron, U2, U5 and U6 snRNPs, and splicing factors. Interacts with TUFT1. Interacts with DHX15; indicative for a recruitment of DHX15 to the IL complex. Interacts with GCFC2.

The protein localises to the cytoplasm. Its subcellular location is the nucleus. Its function is as follows. Involved in pre-mRNA splicing, specifically in spliceosome disassembly during late-stage splicing events. Intron turnover seems to proceed through reactions in two lariat-intron associated complexes termed Intron Large (IL) and Intron Small (IS). In cooperation with DHX15 seems to mediate the transition of the U2, U5 and U6 snRNP-containing IL complex to the snRNP-free IS complex leading to efficient debranching and turnover of excised introns. May play a role in the differentiation of ameloblasts and odontoblasts or in the forming of the enamel extracellular matrix. This is Tuftelin-interacting protein 11 (TFIP11) from Bos taurus (Bovine).